Here is a 138-residue protein sequence, read N- to C-terminus: UPF0201 protein PH1010 (138 aa).

This sequence belongs to the UPF0201 family.

This chain is UPF0201 protein PH1010, found in Pyrococcus horikoshii (strain ATCC 700860 / DSM 12428 / JCM 9974 / NBRC 100139 / OT-3).